The primary structure comprises 138 residues: ATP synthase epsilon chain (138 aa).

Belongs to the ATPase epsilon chain family. F-type ATPases have 2 components, CF(1) - the catalytic core - and CF(0) - the membrane proton channel. CF(1) has five subunits: alpha(3), beta(3), gamma(1), delta(1), epsilon(1). CF(0) has three main subunits: a, b and c.

The protein resides in the cell inner membrane. Produces ATP from ADP in the presence of a proton gradient across the membrane. The sequence is that of ATP synthase epsilon chain from Endomicrobium trichonymphae.